Consider the following 220-residue polypeptide: Uracil-DNA glycosylase 2 (220 aa).

D65 (proton acceptor) is an active-site residue.

This sequence belongs to the uracil-DNA glycosylase (UDG) superfamily. UNG family.

The protein localises to the cytoplasm. It catalyses the reaction Hydrolyzes single-stranded DNA or mismatched double-stranded DNA and polynucleotides, releasing free uracil.. Its function is as follows. Excises uracil residues from the DNA which can arise as a result of misincorporation of dUMP residues by DNA polymerase or due to deamination of cytosine. This is Uracil-DNA glycosylase 2 from Bacteroides fragilis (strain ATCC 25285 / DSM 2151 / CCUG 4856 / JCM 11019 / LMG 10263 / NCTC 9343 / Onslow / VPI 2553 / EN-2).